The sequence spans 2517 residues: Protein capicua homolog (2517 aa).

Disordered regions lie at residues Met1–Tyr197, Leu300–Pro325, Pro342–Lys483, Glu531–Ser579, Ser608–Arg640, and Val658–Val767. The segment covering Glu57 to Ala67 has biased composition (acidic residues). The span at Glu91–Arg101 shows a compositional bias: basic and acidic residues. Composition is skewed to low complexity over residues Thr158–Thr167 and Leu300–Ser313. Positions His396–Pro405 are enriched in basic and acidic residues. Residues Leu414–Ser428 show a composition bias toward pro residues. Residues Gly451–Ala477 are compositionally biased toward low complexity. Positions Ser608–Val619 are enriched in polar residues. Over residues Asp677–Ala686 the composition is skewed to pro residues. Polar residues predominate over residues Thr698–Val707. A compositionally biased stretch (gly residues) spans Gly726–Ala735. Ser776 and Ser780 each carry phosphoserine. Disordered regions lie at residues Ile812 to Gly842, Pro955 to Arg1110, Cys1179 to Val1220, Ser1235 to Gly1274, Ser1290 to Glu1347, Arg1379 to Thr1539, and Ile1595 to Gly1628. The tract at residues Glu937 to Pro955 is interaction with ATXN1. A compositionally biased stretch (polar residues) spans Asp959–Lys981. 2 positions are modified to phosphoserine: Ser1055 and Ser1082. Composition is skewed to basic and acidic residues over residues Pro1087–Arg1110, Cys1179–Ser1188, and Gly1200–Met1209. Position 1099 is an omega-N-methylarginine (Arg1099). The segment at residues Ile1109–Lys1177 is a DNA-binding region (HMG box). Ser1186 carries the phosphoserine modification. The segment covering Ser1235 to Cys1245 has biased composition (polar residues). Ser1271 is subject to Phosphoserine. Low complexity predominate over residues Gly1305–Gly1323. Phosphoserine occurs at positions 1340, 1345, and 1405. The segment covering Pro1418–Pro1430 has biased composition (pro residues). Over residues Ser1439–Ala1456 the composition is skewed to low complexity. The segment covering Thr1457–Gly1474 has biased composition (polar residues). Residues Ser1609, Ser1630, and Ser1648 each carry the phosphoserine modification. Arg1772 is subject to Asymmetric dimethylarginine. Residues Gln1799–Pro1818 form a disordered region. An Omega-N-methylarginine modification is found at Arg1843. Disordered stretches follow at residues Ala2039–Ala2064, Ser2100–Glu2342, and Ala2430–Arg2517. Low complexity predominate over residues Ala2051–Ala2064. 2 stretches are compositionally biased toward pro residues: residues Gly2110–Pro2119 and Pro2136–Pro2145. Low complexity predominate over residues Glu2146–Ser2155. Position 2177 is an N6-acetyllysine (Lys2177). Residues Pro2198 to Ala2209 are compositionally biased toward pro residues. Thr2200 carries the post-translational modification Phosphothreonine. The residue at position 2203 (Ser2203) is a Phosphoserine. Residues Val2210–Gly2225 show a composition bias toward low complexity. Residues Lys2249–Glu2278 show a composition bias toward basic and acidic residues. Residues Ser2260, Ser2282, Ser2287, Ser2291, Ser2298, and Ser2306 each carry the phosphoserine modification. At Thr2307 the chain carries Phosphothreonine. Ser2311 and Ser2318 each carry phosphoserine. A compositionally biased stretch (pro residues) spans Ala2457–Thr2469. Ser2504 is modified (phosphoserine).

In terms of assembly, found in a complex with ATXN1 and ATXN1L. As to quaternary structure, interacts with ATXN1. In terms of tissue distribution, expressed in fetal brain.

It localises to the nucleus. Functionally, transcriptional repressor which plays a role in development of the central nervous system (CNS). In concert with ATXN1 and ATXN1L, involved in brain development. This is Protein capicua homolog (CIC) from Homo sapiens (Human).